The primary structure comprises 202 residues: Large ribosomal subunit protein bL25 (202 aa).

It belongs to the bacterial ribosomal protein bL25 family. CTC subfamily. Part of the 50S ribosomal subunit; part of the 5S rRNA/L5/L18/L25 subcomplex. Contacts the 5S rRNA. Binds to the 5S rRNA independently of L5 and L18.

Functionally, this is one of the proteins that binds to the 5S RNA in the ribosome where it forms part of the central protuberance. This is Large ribosomal subunit protein bL25 from Methylococcus capsulatus (strain ATCC 33009 / NCIMB 11132 / Bath).